Reading from the N-terminus, the 334-residue chain is Porphobilinogen deaminase (334 aa).

C258 bears the S-(dipyrrolylmethanemethyl)cysteine mark.

The protein belongs to the HMBS family. As to quaternary structure, monomer. Dipyrromethane is required as a cofactor.

The catalysed reaction is 4 porphobilinogen + H2O = hydroxymethylbilane + 4 NH4(+). It participates in porphyrin-containing compound metabolism; protoporphyrin-IX biosynthesis; coproporphyrinogen-III from 5-aminolevulinate: step 2/4. Its function is as follows. Tetrapolymerization of the monopyrrole PBG into the hydroxymethylbilane pre-uroporphyrinogen in several discrete steps. The polypeptide is Porphobilinogen deaminase (Ralstonia nicotianae (strain ATCC BAA-1114 / GMI1000) (Ralstonia solanacearum)).